Here is a 123-residue protein sequence, read N- to C-terminus: Small ribosomal subunit protein uS12 (123 aa).

A disordered region spans residues 1-26 (MPTLNQLVRKPRKRPVAKSKVPALDA). At D89 the chain carries 3-methylthioaspartic acid. The tract at residues 104 to 123 (TAGVKNRKQSRSKYGAKRPK) is disordered. Residues 108 to 123 (KNRKQSRSKYGAKRPK) show a composition bias toward basic residues.

This sequence belongs to the universal ribosomal protein uS12 family. As to quaternary structure, part of the 30S ribosomal subunit. Contacts proteins S8 and S17. May interact with IF1 in the 30S initiation complex.

In terms of biological role, with S4 and S5 plays an important role in translational accuracy. Its function is as follows. Interacts with and stabilizes bases of the 16S rRNA that are involved in tRNA selection in the A site and with the mRNA backbone. Located at the interface of the 30S and 50S subunits, it traverses the body of the 30S subunit contacting proteins on the other side and probably holding the rRNA structure together. The combined cluster of proteins S8, S12 and S17 appears to hold together the shoulder and platform of the 30S subunit. This chain is Small ribosomal subunit protein uS12, found in Acidithiobacillus ferrooxidans (strain ATCC 23270 / DSM 14882 / CIP 104768 / NCIMB 8455) (Ferrobacillus ferrooxidans (strain ATCC 23270)).